Reading from the N-terminus, the 81-residue chain is Antitoxin VapB28 (81 aa).

Its function is as follows. Antitoxin component of a type II toxin-antitoxin (TA) system. The polypeptide is Antitoxin VapB28 (vapB28) (Mycobacterium tuberculosis (strain CDC 1551 / Oshkosh)).